A 153-amino-acid polypeptide reads, in one-letter code: UPF0266 membrane protein YE1773 (153 aa).

3 consecutive transmembrane segments (helical) span residues 6–26 (IVLI…EFIM), 45–65 (IDCA…VMAN), and 67–87 (EPLT…LSYI).

This sequence belongs to the UPF0266 family.

It localises to the cell inner membrane. The chain is UPF0266 membrane protein YE1773 from Yersinia enterocolitica serotype O:8 / biotype 1B (strain NCTC 13174 / 8081).